The primary structure comprises 379 residues: UDP-N-acetylglucosamine--N-acetylmuramyl-(pentapeptide) pyrophosphoryl-undecaprenol N-acetylglucosamine transferase (379 aa).

Residues 13–15 (TGG), Asn123, Arg166, Ser194, and Gln295 each bind UDP-N-acetyl-alpha-D-glucosamine.

The protein belongs to the glycosyltransferase 28 family. MurG subfamily.

Its subcellular location is the cell inner membrane. The enzyme catalyses di-trans,octa-cis-undecaprenyl diphospho-N-acetyl-alpha-D-muramoyl-L-alanyl-D-glutamyl-meso-2,6-diaminopimeloyl-D-alanyl-D-alanine + UDP-N-acetyl-alpha-D-glucosamine = di-trans,octa-cis-undecaprenyl diphospho-[N-acetyl-alpha-D-glucosaminyl-(1-&gt;4)]-N-acetyl-alpha-D-muramoyl-L-alanyl-D-glutamyl-meso-2,6-diaminopimeloyl-D-alanyl-D-alanine + UDP + H(+). It participates in cell wall biogenesis; peptidoglycan biosynthesis. Cell wall formation. Catalyzes the transfer of a GlcNAc subunit on undecaprenyl-pyrophosphoryl-MurNAc-pentapeptide (lipid intermediate I) to form undecaprenyl-pyrophosphoryl-MurNAc-(pentapeptide)GlcNAc (lipid intermediate II). This chain is UDP-N-acetylglucosamine--N-acetylmuramyl-(pentapeptide) pyrophosphoryl-undecaprenol N-acetylglucosamine transferase, found in Rhodospirillum centenum (strain ATCC 51521 / SW).